We begin with the raw amino-acid sequence, 167 residues long: Ribosome maturation factor RimM (167 aa).

One can recognise a PRC barrel domain in the interval E94–L167.

The protein belongs to the RimM family. As to quaternary structure, binds ribosomal protein uS19.

It is found in the cytoplasm. Functionally, an accessory protein needed during the final step in the assembly of 30S ribosomal subunit, possibly for assembly of the head region. Essential for efficient processing of 16S rRNA. May be needed both before and after RbfA during the maturation of 16S rRNA. It has affinity for free ribosomal 30S subunits but not for 70S ribosomes. In Thermoanaerobacter pseudethanolicus (strain ATCC 33223 / 39E) (Clostridium thermohydrosulfuricum), this protein is Ribosome maturation factor RimM.